We begin with the raw amino-acid sequence, 113 residues long: MDRDDELDEIRRRKMAEYQNMMQERAYEEEQKKAAAEEEARRQQILRQILSPEARERLSRLKLVRPDLVENVENQLIQLAGMGRINKVISDNELKSILLRLTENRHETRIERR.

It belongs to the PDCD5 family.

The protein is DNA-binding protein PTO0204 of Picrophilus torridus (strain ATCC 700027 / DSM 9790 / JCM 10055 / NBRC 100828 / KAW 2/3).